We begin with the raw amino-acid sequence, 481 residues long: Glutamate--tRNA ligase 2 (481 aa).

The short motif at 17 to 27 is the 'HIGH' region element; the sequence is PSPTGFLHIGG. The segment covering 118–139 has biased composition (basic and acidic residues); it reads AEQRAKKQPQRYDGRWRDRDPS. The segment at 118 to 143 is disordered; it reads AEQRAKKQPQRYDGRWRDRDPSEAPA. The short motif at 246–250 is the 'KMSKS' region element; sequence KLSKR. K249 contacts ATP.

Belongs to the class-I aminoacyl-tRNA synthetase family. Glutamate--tRNA ligase type 1 subfamily. As to quaternary structure, monomer.

It is found in the cytoplasm. It carries out the reaction tRNA(Glu) + L-glutamate + ATP = L-glutamyl-tRNA(Glu) + AMP + diphosphate. Functionally, catalyzes the attachment of glutamate to tRNA(Glu) in a two-step reaction: glutamate is first activated by ATP to form Glu-AMP and then transferred to the acceptor end of tRNA(Glu). In Zymomonas mobilis subsp. mobilis (strain ATCC 31821 / ZM4 / CP4), this protein is Glutamate--tRNA ligase 2.